A 275-amino-acid chain; its full sequence is uncharacterized protein (275 aa).

Its subcellular location is the virion. This is an uncharacterized protein from Acanthamoeba polyphaga (Amoeba).